A 266-amino-acid chain; its full sequence is MYQVVASDLDGTLLSPDHTLSPYAKETLKLLTARGINFVFATGRHHVDVGQIRDNLEIKSYMITSNGARVHDLDGNLIFAHNLDRDIASDLFGVVNDNPDIITNVYRDDEWFMNRHRPEEMRFFKEAVFQYALYEPGLLEPEGVSKVFFTCDSHEQLLPLEQAINARWGDRVNVSFSTLTCLEVMAGGVSKGHALEAVAKKLGYSLKDCIAFGDGMNDAEMLSMAGKGCIMGSAHQRLKDLHPELEVIGTNADDAVPHYLRKLYLS.

Asp-8 acts as the Nucleophile in catalysis. Asp-8 provides a ligand contact to Mg(2+). Leu-9 contacts phosphate. Asp-10 contributes to the Mg(2+) binding site. Phosphate is bound by residues 42 to 43 (TG) and Lys-191. Asp-214 provides a ligand contact to Mg(2+). Phosphate is bound at residue Asn-217.

The protein belongs to the HAD-like hydrolase superfamily. Cof family. Requires Mg(2+) as cofactor. Mn(2+) serves as cofactor. Co(2+) is required as a cofactor. It depends on Zn(2+) as a cofactor.

It catalyses the reaction pyridoxal 5'-phosphate + H2O = pyridoxal + phosphate. It carries out the reaction sugar phosphate + H2O = sugar + phosphate.. Functionally, catalyzes Strongly the dephosphorylation of pyridoxal-phosphate (PLP) and moderately the dephosphorylation of 2-deoxyglucose 6-phosphate (2bGLU6P) and beta-glucose 6-phosphate (bGlu6P). Also hydrolyzes both purines (GMP and IMP) and pyrimidines as secondary substrates. This is Pyridoxal phosphate phosphatase YigL (yigL) from Escherichia coli (strain K12).